A 373-amino-acid chain; its full sequence is MRALTPPTIRAAFRGQLGGFALDAAFTVPATGITGLFGPSGCGKSSVLRCLAGLQHLPGSSCEVGGEVWQDDTTFLKPHHRPIGYVFQEASLFQHLSVKANLLYGAPRESGKAHADAVEFDEVIELLGLAKLLARSPRNLSGGERQRVAIGRALLSQPKLLLMDEPLSALDRLTKDEILPFLERLHARLSLPVIYVSHDITEIERLADHLVLMQSGKVLAVGPLTELQSDPKLPLAIARDAAVNFDAEVESYDADYGLVRLQIDGGRLLVPSAPVATGEFRRVRIAASDVSLARELPQASSILNAIAARIVITSPVGANEMLVVLALGREGHGGRLLARLSRRSWDLLQLAEGVDVYAQIKGVALAPGRDGHV.

In terms of domain architecture, ABC transporter spans 4–240 (LTPPTIRAAF…PKLPLAIARD (237 aa)). ATP is bound at residue 38–45 (GPSGCGKS). Residues 299–369 (ASSILNAIAA…IKGVALAPGR (71 aa)) form the Mop domain.

Belongs to the ABC transporter superfamily. Molybdate importer (TC 3.A.1.8) family. In terms of assembly, the complex is composed of two ATP-binding proteins (ModC), two transmembrane proteins (ModB) and a solute-binding protein (ModA).

Its subcellular location is the cell inner membrane. The enzyme catalyses molybdate(out) + ATP + H2O = molybdate(in) + ADP + phosphate + H(+). Its function is as follows. Part of the ABC transporter complex ModABC involved in molybdenum import. Responsible for energy coupling to the transport system. This chain is Molybdenum import ATP-binding protein ModC, found in Rhodopseudomonas palustris (strain ATCC BAA-98 / CGA009).